The primary structure comprises 723 residues: Transient receptor potential cation channel subfamily V member 5 (723 aa).

Residues 1–320 lie on the Cytoplasmic side of the membrane; it reads MGVKKPWIQL…SLKWKKYGQP (320 aa). ANK repeat units lie at residues 72–101, 110–139, 156–185, 189–222, and 232–261; these read LGET…YLVT, VGQT…SASA, YGEH…DIRA, LGNT…GDHL, and QGLT…HIQW. Residues 321–341 form a helical membrane-spanning segment; that stretch reads YFCLLGMLYIFYMICFTTCCV. The Extracellular segment spans residues 342 to 378; that stretch reads YRPLKFRDANRTHVRDNTVLEQKPLQEAYVTYQDKVR. An N-linked (GlcNAc...) asparagine glycan is attached at asparagine 351. Residues 379-401 form a helical membrane-spanning segment; that stretch reads LVGELVTVIGAVVILLIEIPDIF. Over 402–412 the chain is Cytoplasmic; that stretch reads RVGASRYFGHT. The helical transmembrane segment at 413 to 435 threads the bilayer; the sequence is VLGGPFHVIIITYASLVLLIMVM. Residues 436–441 are Extracellular-facing; that stretch reads RLTSMN. A helical membrane pass occupies residues 442 to 462; sequence GEVVPISMALVLGWCSVMYFS. Topologically, residues 463 to 485 are cytoplasmic; that stretch reads RGFQMLGPFTIMIQKMIFGDLLR. The helical transmembrane segment at 486 to 506 threads the bilayer; the sequence is FCWLMAMVILGFASAFYIIFQ. An intramembrane region (pore-forming) is located at residues 517-537; sequence SDYPTAMFSTFELFLTIIDGP. Aspartate 535 contributes to the Ca(2+) binding site. Residues 550-570 traverse the membrane as a helical segment; the sequence is LTYFAFAIIATLLMLNLFIAM. Residues 571–723 lie on the Cytoplasmic side of the membrane; the sequence is MGDTHWRVAQ…EGDGEEIYHF (153 aa). The segment at 591–595 is interaction with S100A10; it reads VATTV. Positions 643–646 are involved in Ca(2+)-dependent inactivation; sequence AFKS. The segment at 651 to 674 is disordered; the sequence is EVQEQLSEKQPSGTETGTLARGSV. Polar residues predominate over residues 654 to 667; the sequence is EQLSEKQPSGTETG. At threonine 678 the chain carries Phosphothreonine. Serine 682 is modified (phosphoserine). An involved in Ca(2+)-dependent inactivation region spans residues 693 to 723; sequence RGWEILRRNTLGHLNLGQDLGEGDGEEIYHF.

The protein belongs to the transient receptor (TC 1.A.4) family. TrpV subfamily. TRPV5 sub-subfamily. In terms of assembly, homotetramer and probably heterotetramer with TRPV6. Interacts with TRPV6. Interacts with S100A10 and probably with the ANAX2-S100A10 heterotetramer. The interaction with S100A10 is required for the trafficking to the plasma membrane. Interacts with calmodulin. Interacts with BSPRY, which results in its inactivation. In terms of processing, glycosylated. In terms of tissue distribution, detected in kidney (at protein level). Detected in kidney.

It localises to the cell membrane. The protein resides in the apical cell membrane. It catalyses the reaction Ca(2+)(in) = Ca(2+)(out). Activated by WNK3. Constitutively active calcium selective cation channel thought to be involved in Ca(2+) reabsorption in kidney and intestine. Required for normal Ca(2+) reabsorption in the kidney distal convoluted tubules. The channel is activated by low internal calcium level and the current exhibits an inward rectification. A Ca(2+)-dependent feedback regulation includes fast channel inactivation and slow current decay. Heteromeric assembly with TRPV6 seems to modify channel properties. TRPV5-TRPV6 heteromultimeric concatemers exhibit voltage-dependent gating. The sequence is that of Transient receptor potential cation channel subfamily V member 5 (Trpv5) from Rattus norvegicus (Rat).